The sequence spans 270 residues: uncharacterized protein (270 aa).

A signal peptide spans 1–22; it reads MEYIKKIALYMSVLLLIIFIGG. C23 carries the N-palmitoyl cysteine lipid modification. A lipid anchor (S-diacylglycerol cysteine) is attached at C23.

This sequence belongs to the staphylococcal tandem lipoprotein family.

The protein localises to the cell membrane. This is an uncharacterized protein from Staphylococcus aureus (strain USA300).